A 208-amino-acid polypeptide reads, in one-letter code: FMN-dependent NADH:quinone oxidoreductase 1 (208 aa).

S10 is a binding site for FMN.

This sequence belongs to the azoreductase type 1 family. Homodimer. The cofactor is FMN.

It catalyses the reaction 2 a quinone + NADH + H(+) = 2 a 1,4-benzosemiquinone + NAD(+). It carries out the reaction N,N-dimethyl-1,4-phenylenediamine + anthranilate + 2 NAD(+) = 2-(4-dimethylaminophenyl)diazenylbenzoate + 2 NADH + 2 H(+). In terms of biological role, quinone reductase that provides resistance to thiol-specific stress caused by electrophilic quinones. Contributes to resistance to 2-methylhydroquinone (2-MHQ) and catechol. Its function is as follows. Also exhibits azoreductase activity. Catalyzes the reductive cleavage of the azo bond in aromatic azo compounds to the corresponding amines. The protein is FMN-dependent NADH:quinone oxidoreductase 1 of Bacillus subtilis (strain 168).